We begin with the raw amino-acid sequence, 589 residues long: Probable peptidoglycan D,D-transpeptidase FtsI (589 aa).

The chain crosses the membrane as a helical span at residues 47–67 (IFLVMGFFGFCFVGVSLGAGW). The active-site Acyl-ester intermediate is the Ser-296.

The protein belongs to the transpeptidase family. Interacts with FtsN and FtsW.

Its subcellular location is the cell inner membrane. The catalysed reaction is Preferential cleavage: (Ac)2-L-Lys-D-Ala-|-D-Ala. Also transpeptidation of peptidyl-alanyl moieties that are N-acyl substituents of D-alanine.. It functions in the pathway cell wall biogenesis; peptidoglycan biosynthesis. Functionally, catalyzes cross-linking of the peptidoglycan cell wall at the division septum. The protein is Probable peptidoglycan D,D-transpeptidase FtsI (ftsI) of Caulobacter vibrioides (strain NA1000 / CB15N) (Caulobacter crescentus).